The following is a 182-amino-acid chain: Putative lipoprotein LpqE (182 aa).

A signal peptide spans 1–29 (MNRCNIRLRLAGMTTWVASIALLAAALSG). Cysteine 30 carries the N-palmitoyl cysteine lipid modification. Cysteine 30 carries the S-diacylglycerol cysteine lipid modification.

It localises to the cell membrane. This is Putative lipoprotein LpqE (lpqE) from Mycobacterium bovis (strain ATCC BAA-935 / AF2122/97).